The chain runs to 185 residues: Ribosome-recycling factor (185 aa).

Belongs to the RRF family.

It localises to the cytoplasm. In terms of biological role, responsible for the release of ribosomes from messenger RNA at the termination of protein biosynthesis. May increase the efficiency of translation by recycling ribosomes from one round of translation to another. The protein is Ribosome-recycling factor of Campylobacter jejuni subsp. jejuni serotype O:2 (strain ATCC 700819 / NCTC 11168).